Consider the following 117-residue polypeptide: Immunoglobulin heavy variable 1-45 (117 aa).

Positions 1 to 19 (MDWTWRILFLVAAVTDAYS) are cleaved as a signal peptide. The segment at 20-44 (QMQLVQSGAEVKKTGSSVKVSCKAS) is framework-1. The region spanning 20 to 117 (QMQLVQSGAE…EDTAMYYCAR (98 aa)) is the Ig-like domain. Cys-41 and Cys-115 are disulfide-bonded. Residues 45–52 (GYTFTYRY) form a complementarity-determining-1 region. The framework-2 stretch occupies residues 53-69 (LHWVRQAPGQALEWMGW). The tract at residues 70-77 (ITPFNGNT) is complementarity-determining-2. Residues 78-115 (NYAQKFQDRVTITRDRSMSTAYMELSSLRSEDTAMYYC) form a framework-3 region. The complementarity-determining-3 stretch occupies residues 116-117 (AR).

Immunoglobulins are composed of two identical heavy chains and two identical light chains; disulfide-linked.

It is found in the secreted. Its subcellular location is the cell membrane. Functionally, v region of the variable domain of immunoglobulin heavy chains that participates in the antigen recognition. Immunoglobulins, also known as antibodies, are membrane-bound or secreted glycoproteins produced by B lymphocytes. In the recognition phase of humoral immunity, the membrane-bound immunoglobulins serve as receptors which, upon binding of a specific antigen, trigger the clonal expansion and differentiation of B lymphocytes into immunoglobulins-secreting plasma cells. Secreted immunoglobulins mediate the effector phase of humoral immunity, which results in the elimination of bound antigens. The antigen binding site is formed by the variable domain of one heavy chain, together with that of its associated light chain. Thus, each immunoglobulin has two antigen binding sites with remarkable affinity for a particular antigen. The variable domains are assembled by a process called V-(D)-J rearrangement and can then be subjected to somatic hypermutations which, after exposure to antigen and selection, allow affinity maturation for a particular antigen. In Homo sapiens (Human), this protein is Immunoglobulin heavy variable 1-45.